Here is a 179-residue protein sequence, read N- to C-terminus: Large ribosomal subunit protein uL6 (179 aa).

It belongs to the universal ribosomal protein uL6 family. As to quaternary structure, part of the 50S ribosomal subunit.

Its function is as follows. This protein binds to the 23S rRNA, and is important in its secondary structure. It is located near the subunit interface in the base of the L7/L12 stalk, and near the tRNA binding site of the peptidyltransferase center. The protein is Large ribosomal subunit protein uL6 of Fructilactobacillus sanfranciscensis (Lactobacillus sanfranciscensis).